The primary structure comprises 189 residues: Large ribosomal subunit protein uL6 (189 aa).

This sequence belongs to the universal ribosomal protein uL6 family. In terms of assembly, part of the 50S ribosomal subunit.

This protein binds to the 23S rRNA, and is important in its secondary structure. It is located near the subunit interface in the base of the L7/L12 stalk, and near the tRNA binding site of the peptidyltransferase center. The polypeptide is Large ribosomal subunit protein uL6 (Bacteroides thetaiotaomicron (strain ATCC 29148 / DSM 2079 / JCM 5827 / CCUG 10774 / NCTC 10582 / VPI-5482 / E50)).